Here is a 163-residue protein sequence, read N- to C-terminus: Large ribosomal subunit protein uL10 (163 aa).

Belongs to the universal ribosomal protein uL10 family. As to quaternary structure, part of the ribosomal stalk of the 50S ribosomal subunit. The N-terminus interacts with L11 and the large rRNA to form the base of the stalk. The C-terminus forms an elongated spine to which L12 dimers bind in a sequential fashion forming a multimeric L10(L12)X complex.

Forms part of the ribosomal stalk, playing a central role in the interaction of the ribosome with GTP-bound translation factors. In Haemophilus influenzae (strain 86-028NP), this protein is Large ribosomal subunit protein uL10.